Here is a 302-residue protein sequence, read N- to C-terminus: Homoserine O-acetyltransferase (302 aa).

C142 serves as the catalytic Acyl-thioester intermediate. The substrate site is built by K163 and S192. The active-site Proton acceptor is the H235. E237 is a catalytic residue. R249 is a binding site for substrate.

The protein belongs to the MetA family.

It is found in the cytoplasm. The enzyme catalyses L-homoserine + acetyl-CoA = O-acetyl-L-homoserine + CoA. Its pathway is amino-acid biosynthesis; L-methionine biosynthesis via de novo pathway; O-acetyl-L-homoserine from L-homoserine: step 1/1. In terms of biological role, transfers an acetyl group from acetyl-CoA to L-homoserine, forming acetyl-L-homoserine. In Geobacillus sp. (strain WCH70), this protein is Homoserine O-acetyltransferase.